A 245-amino-acid chain; its full sequence is Adenosylcobinamide-GDP ribazoletransferase (245 aa).

The next 5 membrane-spanning stretches (helical) occupy residues 31–51, 57–77, 109–129, 134–154, and 176–196; these read LLHY…AALL, PLLQ…ALHL, VAVV…LVVL, PAAL…LFLC, and ALMV…TGLL.

Belongs to the CobS family. It depends on Mg(2+) as a cofactor.

It localises to the cell inner membrane. The catalysed reaction is alpha-ribazole + adenosylcob(III)inamide-GDP = adenosylcob(III)alamin + GMP + H(+). It carries out the reaction alpha-ribazole 5'-phosphate + adenosylcob(III)inamide-GDP = adenosylcob(III)alamin 5'-phosphate + GMP + H(+). The protein operates within cofactor biosynthesis; adenosylcobalamin biosynthesis; adenosylcobalamin from cob(II)yrinate a,c-diamide: step 7/7. In terms of biological role, joins adenosylcobinamide-GDP and alpha-ribazole to generate adenosylcobalamin (Ado-cobalamin). Also synthesizes adenosylcobalamin 5'-phosphate from adenosylcobinamide-GDP and alpha-ribazole 5'-phosphate. The protein is Adenosylcobinamide-GDP ribazoletransferase of Stutzerimonas stutzeri (strain A1501) (Pseudomonas stutzeri).